We begin with the raw amino-acid sequence, 536 residues long: CTP synthase (536 aa).

Residues 1-267 are amidoligase domain; that stretch reads MTKFIFVTGG…DDIVIKRLQL (267 aa). CTP is bound at residue serine 13. Position 13 (serine 13) interacts with UTP. 14–19 contacts ATP; sequence SLGKGI. L-glutamine is bound at residue tyrosine 54. Residue aspartate 71 participates in ATP binding. Residues aspartate 71 and glutamate 141 each coordinate Mg(2+). CTP is bound by residues 148–150, 188–193, and lysine 224; these read DIE and KTKPTQ. UTP is bound by residues 188 to 193 and lysine 224; that span reads KTKPTQ. 240 to 242 contacts ATP; sequence RDA. Positions 293 to 535 constitute a Glutamine amidotransferase type-1 domain; that stretch reads TIGLVGKYVS…IEASLKYQQN (243 aa). Glycine 355 contacts L-glutamine. Cysteine 382 functions as the Nucleophile; for glutamine hydrolysis in the catalytic mechanism. L-glutamine contacts are provided by residues 383 to 386, glutamate 406, and arginine 463; that span reads LGMQ. Residues histidine 508 and glutamate 510 contribute to the active site.

It belongs to the CTP synthase family. Homotetramer.

It catalyses the reaction UTP + L-glutamine + ATP + H2O = CTP + L-glutamate + ADP + phosphate + 2 H(+). The enzyme catalyses L-glutamine + H2O = L-glutamate + NH4(+). It carries out the reaction UTP + NH4(+) + ATP = CTP + ADP + phosphate + 2 H(+). Its pathway is pyrimidine metabolism; CTP biosynthesis via de novo pathway; CTP from UDP: step 2/2. With respect to regulation, allosterically activated by GTP, when glutamine is the substrate; GTP has no effect on the reaction when ammonia is the substrate. The allosteric effector GTP functions by stabilizing the protein conformation that binds the tetrahedral intermediate(s) formed during glutamine hydrolysis. Inhibited by the product CTP, via allosteric rather than competitive inhibition. Catalyzes the ATP-dependent amination of UTP to CTP with either L-glutamine or ammonia as the source of nitrogen. Regulates intracellular CTP levels through interactions with the four ribonucleotide triphosphates. This Staphylococcus aureus (strain NCTC 8325 / PS 47) protein is CTP synthase.